The sequence spans 103 residues: Large ribosomal subunit protein uL22c (103 aa).

This sequence belongs to the universal ribosomal protein uL22 family. In terms of assembly, part of the 50S ribosomal subunit.

Its subcellular location is the plastid. It is found in the chloroplast. Functionally, this protein binds specifically to 23S rRNA. The globular domain of the protein is located near the polypeptide exit tunnel on the outside of the subunit, while an extended beta-hairpin is found that lines the wall of the exit tunnel in the center of the 70S ribosome. This Cyanidium caldarium (Red alga) protein is Large ribosomal subunit protein uL22c (rpl22).